The following is a 104-amino-acid chain: SOSS complex subunit C (104 aa).

Residue Ala-2 is modified to N-acetylalanine.

This sequence belongs to the SOSS-C family. In terms of assembly, component of the SOSS complex, composed of SOSS-B (SOSS-B1/NABP2 or SOSS-B2/NABP1), SOSS-A/INTS3 and SOSS-C/INIP. SOSS complexes containing SOSS-B1/NABP2 are more abundant than complexes containing SOSS-B2/NABP1. Interacts with INTS3; the interaction is direct.

The protein localises to the nucleus. In terms of biological role, component of the SOSS complex, a multiprotein complex that functions downstream of the MRN complex to promote DNA repair and G2/M checkpoint. The SOSS complex associates with single-stranded DNA at DNA lesions and influences diverse endpoints in the cellular DNA damage response including cell-cycle checkpoint activation, recombinational repair and maintenance of genomic stability. Required for efficient homologous recombination-dependent repair of double-strand breaks (DSBs) and ATM-dependent signaling pathways. In Bos taurus (Bovine), this protein is SOSS complex subunit C (INIP).